Here is a 1670-residue protein sequence, read N- to C-terminus: Collagen alpha-3(IV) chain (1670 aa).

The N-terminal stretch at 1 to 28 (MSARTAPRPQVLLLPLLLVLLAAAPAAS) is a signal peptide. The 7S domain stretch occupies residues 29 to 42 (KGCVCKDKGQCFCD). The triple-helical region stretch occupies residues 43 to 1438 (GAKGEKGEKG…KGKRGDSGSP (1396 aa)). Disordered regions lie at residues 49–78 (GEKGFPGPPGSPGQKGFTGPEGLPGPQGPK), 167–469 (LDAK…DGPK), and 502–1442 (GRQG…ATWT). Residues 176–200 (PGAPGPQGLPGPPGFPGPVGPPGPP) show a composition bias toward pro residues. Residues 202–212 (FFGFPGAMGPR) show a composition bias toward low complexity. Residues 217–231 (HMGERVIGHKGERGV) are compositionally biased toward basic and acidic residues. The segment covering 242–251 (GTVIVTLTGP) has biased composition (low complexity). N-linked (GlcNAc...) asparagine glycosylation is present at N253. Residues 253–266 (NRTDLKGEKGDKGA) are compositionally biased toward basic and acidic residues. The span at 382–394 (SPGSSRPGLRGAP) shows a compositional bias: low complexity. The segment covering 402–411 (SKGERGRPGK) has biased composition (basic and acidic residues). Residues 415–428 (GTPGSPGCAGSPGL) show a composition bias toward low complexity. 3 stretches are compositionally biased toward pro residues: residues 429–438 (PGSPGPPGPP), 598–618 (PGDPGSPGSPGPAGPAGPPGY), and 654–675 (VPGPPGPPGPPGHPGPQGPPGI). The short motif at 791-793 (RGD) is the Cell attachment site element. Residues 900–909 (IGPPGPPGNP) show a composition bias toward pro residues. Over residues 974–987 (VPGMPGLKGLKGLP) the composition is skewed to low complexity. The Cell attachment site motif lies at 996–998 (RGD). 3 stretches are compositionally biased toward low complexity: residues 1013 to 1025 (IPGSMGNMGMPGS), 1094 to 1105 (LGPAGPEGAPGS), and 1118 to 1133 (HGDLGFKGIKGLLGPP). Pro residues predominate over residues 1135 to 1148 (IRGPPGLPGFPGSP). Residues 1154 to 1156 (RGD) carry the Cell attachment site motif. Composition is skewed to low complexity over residues 1230–1250 (PGAIIPGQTGNRGPPGSRGSP) and 1290–1299 (PPGRLGAPGT). Positions 1306 to 1308 (RGD) match the Cell attachment site motif. A compositionally biased stretch (pro residues) spans 1332–1341 (PPGPIGPKGP). 2 consecutive short sequence motifs (cell attachment site) follow at residues 1345-1347 (RGD) and 1432-1434 (RGD). Residues 1427 to 1444 (GLKGKRGDSGSPATWTTR) are epitope recognized by Goodpasture antibodies. The region spanning 1445-1669 (GFVFTRHSQT…SRCQVCMKKR (225 aa)) is the Collagen IV NC1 domain. Disulfide bonds link C1460–C1551, C1493–C1548, C1505–C1511, C1570–C1665, C1604–C1662, and C1616–C1622. Residues 1479–1557 (NQRAHGQDLG…CTVCEGPAIA (79 aa)) form a required for the anti-angiogenic activity of tumstatin region. M1533 participates in a covalent cross-link: S-Lysyl-methionine sulfilimine (Met-Lys) (interchain with K-1651). The required for the anti-tumor cell activity of tumstatin stretch occupies residues 1610–1628 (ASPFLECHGRGTCNYYSNS). An S-Lysyl-methionine sulfilimine (Lys-Met) (interchain with M-1533) cross-link involves residue K1651.

Belongs to the type IV collagen family. There are six type IV collagen isoforms, alpha 1(IV)-alpha 6(IV), each of which can form a triple helix structure with 2 other chains to generate type IV collagen network. The alpha 3(IV) chain forms a triple helical protomer with alpha 4(IV) and alpha 5(IV); this triple helical structure dimerizes through NC1-NC1 domain interactions such that the alpha 3(IV), alpha 4(IV) and alpha 5(IV) chains of one protomer connect with the alpha 5(IV), alpha 4(IV) and alpha 3(IV) chains of the opposite promoter, respectively. Interacts with ITGB3. Associates with LAMB2 at the neuromuscular junction and in GBM. In terms of processing, prolines at the third position of the tripeptide repeating unit (G-X-Y) are hydroxylated in some or all of the chains. Post-translationally, isoform 2 contains an additional N-linked glycosylation site. Type IV collagens contain numerous cysteine residues which are involved in inter- and intramolecular disulfide bonding. 12 of these, located in the NC1 domain, are conserved in all known type IV collagens. In terms of processing, the trimeric structure of the NC1 domains is stabilized by covalent bonds between Lys and Met residues. Post-translationally, phosphorylated. Thought to be phosphorylated by CERT, but CERT does not have kinase activity. As to expression, alpha 3 and alpha 4 type IV collagens are colocalized and present in kidney, eye, basement membranes of lens capsule, cochlea, lung, skeletal muscle, aorta, synaptic fibers, fetal kidney and fetal lung. PubMed:8083201 reports similar levels of expression of alpha 3 and alpha 4 type IV collagens in kidney, but PubMed:7523402 reports that in kidney levels of alpha 3 type IV collagen are significantly lower than those of alpha 4 type IV collagen. According to PubMed:8083201, alpha 3 type IV collagen is not detected in heart, brain, placenta, liver, pancreas, extrasynaptic muscle fibers, endoneurial and perineurial nerves, fetal brain, fetal heart and fetal liver. According to PubMed:7523402, alpha 3 type IV collagen is strongly expressed in pancreas, neuroretina and calvaria and not expressed in adrenal, ileum and skin. Isoform 1 and isoform 3 are strongly expressed in kidney, lung, suprarenal capsule, muscle and spleen, in each of these tissues isoform 1 is more abundant than isoform 3. Isoform 1 and isoform 3 are expressed at low levels in artery, fat, pericardium and peripherical nerve, but not in placenta, mesangium, skin, pleura and cultured umbilical endothelial cells.

The protein localises to the secreted. It is found in the extracellular space. Its subcellular location is the extracellular matrix. The protein resides in the basement membrane. Functionally, type IV collagen is the major structural component of glomerular basement membranes (GBM), forming a 'chicken-wire' meshwork together with laminins, proteoglycans and entactin/nidogen. Its function is as follows. Tumstatin, a cleavage fragment corresponding to the collagen alpha 3(IV) NC1 domain, possesses both anti-angiogenic and anti-tumor cell activity; these two anti-tumor properties may be regulated via RGD-independent ITGB3-mediated mechanisms. This chain is Collagen alpha-3(IV) chain (COL4A3), found in Homo sapiens (Human).